Consider the following 1592-residue polypeptide: MTGFEIFKKKYQVIQILNEINNNLEERLISIAKDKSGKLCVLKEIKYLNNKKKLEEFKKEEKNEEGIQKRIYQRNFNLEFNHLKNFSQMNHTSIIKYIEHIESKDEFGLVDRCIFVTEYYEDGDLSSIKEIEFKDIINLFLKMLINLKEFQNVIIHRDIKPENIFLRKFKNNDGKVELDCYLGDYGSAQTLYTQNKSTLIGTNQYIAPEVIEKKGHTNLIDIYSLGKTLLSLSKRNTGFVYNRIYLKLFEIMTNPFETRPNVNQLIEFMCRHHENLKYTLLVSDFQHRDSIKCLNYLKEKLIGILDNKTNPLKKIHIDMEFQGKTYHCNGVLRSEYLRNEYILENYPINNNNNNNNNNNNNNNNNNNNNNNNNNNNNNNNNNNNNNNNNNNNNNNNNNNNNNEGEVVQVIELVSTDEKHYSVLEGHINLSESPILNSLSFHDFKVIRGTAPIMHFNDINTSTTGEEEEEEKKDNLKRQNENNQIEQEDKGEKHLKETLNNNNNNNNNNNNNNNNNNNNNNNNSNYNSNRKCLLVLVPMKNHSFRLYKDILKNADETTVEIIQLKAIFHSLLASYLVSLTGVDFALQFLIRGDGINVYFEPPQPSDTTTSNNGEIKLTDYGFKFLFPFKHVSTVYSECNSTYFDIFPQSIPVKNPLVKEIQQFFKDESQTKIPFTTIFQRLISIVLREEYQYKKYKELEYYFEAFNSIDHHYQQLKINNENLVKSEYITRLIDSKEIIKVVNHLTFMPVDDYFFYVVPHNEKVYGIEVYKNFQDIDFFGHAINIIRLSLAILNDHSKHFKFIDAHKDINSSIYYFVYELPPSLASNYKSTSEIQINNKNNNNFYNNNNNNNNNNNNNNNNNNNSNDKSDNENKLLFKQLINQHFNNCIEFINNINTFAREKNPINILLYSMHTIITKNEMNVSSLYYSYMLFGKVNQCIIGSFYDIGKWVYGDQFEKKIKSATFLKNLQYLVWYKMSMISNNHHQVYFSLSNLYSILNEDDKDMMILNLESSLKINENNENEESLPQKLFKLDDIEFGDNFKYSKILIGGICYYILNIKEGDIFKEDQFGLEKKILLLELKQLESGKKYLCFRKQSHQTNTLKELKFNCRTINKKINDEIILEPLFVVEDSNVTFHFYEYKSSFENIKSIESYSKDNSTDYNGIVIIRSLLYYIQYYLSNYKNDDDGSDDDNDNDNNRSLKLVLVNMKDNESLIYLDIQYLIYRLYGVDISLTNEWTKINESLINGTPSLITNFIQTNRNKILNDSICLEILSNELMIKFKPIEIEIQREINHVTSVVSVVDVDVSGNSSKKKFVRKAIGSIIDLKIIGKNYGGIDLSNPRSLGTYNLIGDSVFRNISFFENKKLFEKFDTNVNFQKEIEFVKNYSKFLNFDISNRIPREYSILKSIKGMNGVVQIDSWYLENDIIYILMDYFDGQNLLEVSQDLINDFTLFSILNQLSKILFELETVYSIHHRDLKPDNILIKNDLTICLADFGISHFSKELKNDQDLYYSKDGTLGYQSPEIYSSELRGNGDIKNQPYKMDVFGLRCVMKYLMSKFNSSSSKLKELVEKMGFFNYDDRISLKELIECLNKL.

Positions 1–302 constitute a Protein kinase 1 domain; sequence MTGFEIFKKK…CLNYLKEKLI (302 aa). Residues 2-10 and Lys43 contribute to the ATP site; that span reads TGFEIFKKK. The active-site Proton acceptor is the Asp158. Disordered regions lie at residues 348-402, 455-526, and 837-867; these read INNN…NNNN, FNDI…SNYN, and KNNNNFYNNNNNNNNNNNNNNNNNNNSNDKS. Residues 349-402 show a composition bias toward low complexity; that stretch reads NNNNNNNNNNNNNNNNNNNNNNNNNNNNNNNNNNNNNNNNNNNNNNNNNNNNNN. Residues 461–518 adopt a coiled-coil conformation; the sequence is STTGEEEEEEKKDNLKRQNENNQIEQEDKGEKHLKETLNNNNNNNNNNNNNNNNNNNN. Residues 486-496 show a composition bias toward basic and acidic residues; that stretch reads QEDKGEKHLKE. 2 stretches are compositionally biased toward low complexity: residues 499 to 526 and 837 to 864; these read NNNNNNNNNNNNNNNNNNNNNNNNSNYN and KNNNNFYNNNNNNNNNNNNNNNNNNNSN. The Protein kinase 2 domain occupies 1342–1592; sequence LGTYNLIGDS…KELIECLNKL (251 aa). Residues 1348-1356 and Lys1376 contribute to the ATP site; that span reads IGDSVFRNI. The Proton acceptor role is filled by Asp1474.

The protein belongs to the protein kinase superfamily. Ser/Thr protein kinase family.

The catalysed reaction is L-seryl-[protein] + ATP = O-phospho-L-seryl-[protein] + ADP + H(+). It carries out the reaction L-threonyl-[protein] + ATP = O-phospho-L-threonyl-[protein] + ADP + H(+). This Dictyostelium discoideum (Social amoeba) protein is Probable serine/threonine-protein kinase DDB_G0293958.